Consider the following 605-residue polypeptide: Isocitrate dehydrogenase kinase/phosphatase (605 aa).

ATP-binding positions include 327-333 and K348; that span reads APGIKGL. Residue D383 is part of the active site.

Belongs to the AceK family.

It is found in the cytoplasm. The catalysed reaction is L-seryl-[isocitrate dehydrogenase] + ATP = O-phospho-L-seryl-[isocitrate dehydrogenase] + ADP + H(+). Functionally, bifunctional enzyme which can phosphorylate or dephosphorylate isocitrate dehydrogenase (IDH) on a specific serine residue. This is a regulatory mechanism which enables bacteria to bypass the Krebs cycle via the glyoxylate shunt in response to the source of carbon. When bacteria are grown on glucose, IDH is fully active and unphosphorylated, but when grown on acetate or ethanol, the activity of IDH declines drastically concomitant with its phosphorylation. This Burkholderia multivorans (strain ATCC 17616 / 249) protein is Isocitrate dehydrogenase kinase/phosphatase.